The chain runs to 353 residues: Protein MGF 360-13L (353 aa).

Belongs to the asfivirus MGF 360 family.

In terms of biological role, plays a role in virus cell tropism, and may be required for efficient virus replication in macrophages. This chain is Protein MGF 360-13L, found in African swine fever virus (isolate Warthog/Namibia/Wart80/1980) (ASFV).